The primary structure comprises 569 residues: Anti-Muellerian hormone type-2 receptor (569 aa).

The N-terminal stretch at 1 to 17 (MLGTLGLWALLPAAVQA) is a signal peptide. Residues 18-148 (PPNRRTCVFF…AAPGESPWMA (131 aa)) lie on the Extracellular side of the membrane. Intrachain disulfides connect Cys-55/Cys-79 and Cys-92/Cys-109. Asn-66 carries N-linked (GlcNAc...) asparagine glycosylation. The N-linked (GlcNAc...) asparagine glycan is linked to Asn-119. The chain crosses the membrane as a helical span at residues 149-169 (LALLGLVLLLLLLLGGIVVAL). Residues 170–569 (LQRKAYRVQS…PGAACASSDV (400 aa)) are Cytoplasmic-facing. The region spanning 201 to 511 (LCFSQVIREG…RLVALVHPQE (311 aa)) is the Protein kinase domain. Residues 207-215 (IREGGHAAV) and Lys-228 contribute to the ATP site. Catalysis depends on Asp-331, which acts as the Proton acceptor. The tract at residues 512 to 535 (AQPCPEGRPHSHPEDWPPAPAPAP) is disordered.

Belongs to the protein kinase superfamily. TKL Ser/Thr protein kinase family. TGFB receptor subfamily. As to quaternary structure, interacts with type I receptor ACVR1. Mg(2+) is required as a cofactor. Requires Mn(2+) as cofactor.

The protein localises to the membrane. It carries out the reaction L-threonyl-[receptor-protein] + ATP = O-phospho-L-threonyl-[receptor-protein] + ADP + H(+). The catalysed reaction is L-seryl-[receptor-protein] + ATP = O-phospho-L-seryl-[receptor-protein] + ADP + H(+). Functionally, on ligand binding, forms a receptor complex consisting of two type II and two type I transmembrane serine/threonine kinases. Type II receptors phosphorylate and activate type I receptors which autophosphorylate, then bind and activate SMAD transcriptional regulators. Receptor for anti-Muellerian hormone. The polypeptide is Anti-Muellerian hormone type-2 receptor (AMHR2) (Oryctolagus cuniculus (Rabbit)).